A 520-amino-acid chain; its full sequence is Nonsense-mediated mRNA decay factor SMG9 (520 aa).

Disordered regions lie at residues 1–94 (MSES…PAPL), 108–143 (KGPVAVTGASTPEGTAPPPPAAPAPPKGEKEGQRPT), and 341–360 (KPSTPSPSHESSSSSGSDEG). S2 carries the N-acetylserine modification. 5 positions are modified to phosphoserine: S2, S4, S7, S32, and S53. A compositionally biased stretch (basic and acidic residues) spans 36–53 (GRERDYIAPWERERRDAS). Pro residues-rich tracts occupy residues 78-94 (QPPPPTAPAAPPAPAPL) and 122-133 (TAPPPPAAPAPP). A compositionally biased stretch (low complexity) spans 342–357 (PSTPSPSHESSSSSGS). S451 bears the Phosphoserine mark.

Belongs to the SMG9 family. As to quaternary structure, self-associates to form homodimers and forms heterodimers with SMG8; these assembly forms may represent SMG1C intermediate forms. Component of the SMG1C complex composed of SMG1, SMG8 and SMG9. Interacts with DHX34; the interaction is RNA-independent. Post-translationally, phosphorylated by SMG1.

Functionally, involved in nonsense-mediated decay (NMD) of mRNAs containing premature stop codons. Is recruited by release factors to stalled ribosomes together with SMG1 and SMG8 (forming the SMG1C protein kinase complex) and, in the SMG1C complex, is required for the efficient association between SMG1 and SMG8. Plays a role in brain, heart, and eye development. The sequence is that of Nonsense-mediated mRNA decay factor SMG9 from Homo sapiens (Human).